Consider the following 466-residue polypeptide: Tissue alpha-L-fucosidase (466 aa).

The N-terminal stretch at 1–31 (MRAPGMRSRPAGPALLLLLLFLGAAESVRRA) is a signal peptide. Phosphothreonine is present on Thr170. 3 N-linked (GlcNAc...) asparagine glycosylation sites follow: Asn241, Asn268, and Asn382.

It belongs to the glycosyl hydrolase 29 family. In terms of assembly, homotetramer.

It is found in the lysosome. It carries out the reaction an alpha-L-fucoside + H2O = L-fucose + an alcohol. It catalyses the reaction a neolactoside IV(2)-alpha-Fuc-nLc4Cer(d18:1(4E)) + H2O = a neolactoside nLc4Cer(d18:1(4E)) + L-fucose. The enzyme catalyses a neolactoside IV(2)-alpha-Fuc-nLc4Cer(d18:0) + H2O = a neolactoside nLc4Cer(d18:0) + L-fucose. Its function is as follows. Alpha-L-fucosidase is responsible for hydrolyzing the alpha-1,6-linked fucose joined to the reducing-end N-acetylglucosamine of the carbohydrate moieties of glycoproteins. In Homo sapiens (Human), this protein is Tissue alpha-L-fucosidase.